The primary structure comprises 963 residues: Kinesin-1 heavy chain (963 aa).

Ala-2 carries the N-acetylalanine modification. Residues 8 to 325 (NIKVMCRFRP…LLFGQRAKTI (318 aa)) enclose the Kinesin motor domain. Position 85 to 92 (85 to 92 (GQTSSGKT)) interacts with ATP. A Glycyl lysine isopeptide (Lys-Gly) (interchain with G-Cter in SUMO2) cross-link involves residue Lys-213. The stretch at 329–914 (VCVNVELTAE…AVRSKNMARR (586 aa)) forms a coiled coil. Residues 908 to 963 (SKNMARRGHSAQIAKPIRPGQHPAASPTHPSAIRGGGAFVQNSQPVAVRGGGGKQV) form a disordered region. Residues 915 to 963 (GHSAQIAKPIRPGQHPAASPTHPSAIRGGGAFVQNSQPVAVRGGGGKQV) are globular. Position 933 is a phosphoserine (Ser-933). Arg-956 bears the Omega-N-methylarginine mark.

It belongs to the TRAFAC class myosin-kinesin ATPase superfamily. Kinesin family. Kinesin subfamily. Oligomer composed of two heavy chains and two light chains. Interacts with GRIP1 and PPP1R42. Interacts with SYBU. Interacts with JAKMIP1. Interacts with PLEKHM2. Interacts with ECPAS. Interacts with ZFYVE27. Found in a complex with OGT, RHOT1, RHOT2 and TRAK1. Interacts with APP (via cytoplasmic domain).

Its subcellular location is the cytoplasm. It localises to the cytoskeleton. The protein localises to the cytolytic granule membrane. The protein resides in the lysosome membrane. In terms of biological role, microtubule-dependent motor required for normal distribution of mitochondria and lysosomes. Can induce formation of neurite-like membrane protrusions in non-neuronal cells in a ZFYVE27-dependent manner. Regulates centrosome and nuclear positioning during mitotic entry. During the G2 phase of the cell cycle in a BICD2-dependent manner, antagonizes dynein function and drives the separation of nuclei and centrosomes. Required for anterograde axonal transportation of MAPK8IP3/JIP3 which is essential for MAPK8IP3/JIP3 function in axon elongation. Through binding with PLEKHM2 and ARL8B, directs lysosome movement toward microtubule plus ends. Involved in NK cell-mediated cytotoxicity. Drives the polarization of cytolytic granules and microtubule-organizing centers (MTOCs) toward the immune synapse between effector NK lymphocytes and target cells. The sequence is that of Kinesin-1 heavy chain from Homo sapiens (Human).